A 453-amino-acid chain; its full sequence is O-methyltransferase bik3 (453 aa).

A disordered region spans residues 1-25 (MVSNGISNGTNGTNGTTTNGTNGVN). The segment covering 8-25 (NGTNGTNGTTTNGTNGVN) has biased composition (low complexity). Asp-305 contributes to the S-adenosyl-L-methionine binding site. The active-site Proton acceptor is His-355.

This sequence belongs to the class I-like SAM-binding methyltransferase superfamily. Cation-independent O-methyltransferase family. COMT subfamily.

Its pathway is secondary metabolite biosynthesis. O-methyltransferase; part of the gene cluster that mediates the biosynthesis of bikaverin, a red pigment also considered as a mycotoxin. The first stage is catalyzed by the polyketide synthase bik1, which catalyzes the formation of the intermediate SMA76a also knowm as pre-bikaverin. FAD-dependent monooxygenase bik2 might then be responsible for the oxidation of pre-bikaverin to oxo-pre-bikaverin which is in turn methylated by the O-methyltransferase bik3 to me-oxo-pre-bikaverin. A further cycle of oxydation and methylation by bik2 and bik3 leads to the final product of bikaverin, via a nor-bikaverin intermediate. The sequence is that of O-methyltransferase bik3 from Gibberella fujikuroi (strain CBS 195.34 / IMI 58289 / NRRL A-6831) (Bakanae and foot rot disease fungus).